A 231-amino-acid polypeptide reads, in one-letter code: MAKLTKRQKAIAEKIEAGKAYNFEEAATLLASLPTAKFVESYDIAVNLGVDPRKSDQVVRSATVLPHGTGKTVRVAVFTQGPAAEAALAAGADRVGMDDLAAEMKGGDLNYDVVIASPDAMRVVGQLGQVLGPRGLMPNPKVGTVTPDVATAVKNAKAGQVRYRTDKNGIIHTSVGKVGFEAGKLKENVEALIADLKRIKPASSKGIYVKRVTLSTTMGPGLIIDQSSLNV.

It belongs to the universal ribosomal protein uL1 family. Part of the 50S ribosomal subunit.

Binds directly to 23S rRNA. The L1 stalk is quite mobile in the ribosome, and is involved in E site tRNA release. Its function is as follows. Protein L1 is also a translational repressor protein, it controls the translation of the L11 operon by binding to its mRNA. This is Large ribosomal subunit protein uL1 from Pseudomonas entomophila (strain L48).